The sequence spans 389 residues: Large envelope protein (389 aa).

N-acetylmethionine is present on methionine 1. A lipid anchor (N-myristoyl glycine; by host) is attached at glycine 2. The segment at 2–108 (GTNLSVPNPL…PPLRDTHPQA (107 aa)) is pre-S1. A pre-S region spans residues 2 to 163 (GTNLSVPNPL…LSKTGDPVPN (162 aa)). The Virion surface; in external conformation portion of the chain corresponds to 2–170 (GTNLSVPNPL…VPNMENIASG (169 aa)). Residues 2–242 (GTNLSVPNPL…PGYRWMCLRR (241 aa)) are Intravirion; in internal conformation-facing. The tract at residues 74–103 (LTTVPAAPPPASTNRQSGRQPTPLSPPLRD) is disordered. Polar residues predominate over residues 85–95 (STNRQSGRQPT). The pre-S2 stretch occupies residues 109 to 163 (MQWNSTTFHQTLQDPGVRALYFPAGGSSSGTVSPAQNTVSAISSILSKTGDPVPN). The helical transmembrane segment at 171–191 (LLGPLLVLQAGFFLLTKILTI) threads the bilayer. The Intravirion; in external conformation segment spans residues 192–242 (PQSLDSWWTSLNFLGGTPVCLGQNSQSQISSHSPTCCPPICPGYRWMCLRR). Residues 243-263 (FIIFLCILLLCLIFLLVLLDY) form a helical membrane-spanning segment. Residues 264-337 (QGMLPVCPLI…WASVRFSWLS (74 aa)) lie on the Virion surface side of the membrane. Residue asparagine 309 is glycosylated (N-linked (GlcNAc...) asparagine; by host). Residues 338–358 (LLVPFVQWFVGLSPTVWLSVI) traverse the membrane as a helical segment. The Intravirion portion of the chain corresponds to 359-364 (WMIWFW). The chain crosses the membrane as a helical span at residues 365–387 (GPSLYNILSPFMPLLPIFFCLWV). Topologically, residues 388–389 (YI) are virion surface.

This sequence belongs to the orthohepadnavirus major surface antigen family. Interacts (via its myristoylated pre-S1 region) with the host SLC10A1/NTCP; this interaction is essential for viral entry. As to quaternary structure, in its internal form (Li-HBsAg), interacts with the capsid protein and with the isoform S. Interacts with host chaperone CANX. In terms of assembly, associates with host chaperone CANX through its pre-S2 N glycan; this association may be essential for isoform M proper secretion. Interacts with isoform L. Interacts with the antigens of satellite virus HDV (HDVAgs); this interaction is required for encapsidation of HDV genomic RNA. In terms of processing, isoform M is N-terminally acetylated by host at a ratio of 90%, and N-glycosylated by host at the pre-S2 region. Post-translationally, myristoylated; this modification is essential for its interaction with the host protein SLC10A1/NTCP.

The protein resides in the virion membrane. In terms of biological role, the large envelope protein exists in two topological conformations, one which is termed 'external' or Le-HBsAg and the other 'internal' or Li-HBsAg. In its external conformation the protein attaches the virus to cell receptors and thereby initiating infection. This interaction determines the species specificity and liver tropism. This attachment induces virion internalization predominantly through caveolin-mediated endocytosis. The large envelope protein also assures fusion between virion membrane and endosomal membrane. In its internal conformation the protein plays a role in virion morphogenesis and mediates the contact with the nucleocapsid like a matrix protein. Its function is as follows. The middle envelope protein plays an important role in the budding of the virion. It is involved in the induction of budding in a nucleocapsid independent way. In this process the majority of envelope proteins bud to form subviral lipoprotein particles of 22 nm of diameter that do not contain a nucleocapsid. The protein is Large envelope protein of Hepatitis B virus genotype B/C subtype adw (isolate Okinawa/pODW282/1998) (HBV-B).